A 221-amino-acid polypeptide reads, in one-letter code: uncharacterized protein (221 aa).

An N-terminal signal peptide occupies residues 1-26 (MVRLVPRAFAATVALLAAGFSPATAS).

This is an uncharacterized protein from Mycobacterium tuberculosis (strain ATCC 25618 / H37Rv).